The sequence spans 230 residues: MTMPFYVPAEQQMKDKADYARKGIARGRSVVVLQYDDGILFVADNPSRALHKISEIYDRIAFAAVGKYNEFETLRLAGVRYADINGYQYDRRDVTARGLANAYAQTLGTIFTETAKPYEVELVVAEAGLDADSDQIYRLTFDGSVRDEHGYVAMGGQVDAVEQALKERFTEGMSLSAALRAGVQSLEAQESGRRLEAKALEVAVLDRNREHRLFRRLPAPRIEELLAEGA.

The protein belongs to the peptidase T1A family. In terms of assembly, the 20S proteasome core is composed of 14 alpha and 14 beta subunits that assemble into four stacked heptameric rings, resulting in a barrel-shaped structure. The two inner rings, each composed of seven catalytic beta subunits, are sandwiched by two outer rings, each composed of seven alpha subunits. The catalytic chamber with the active sites is on the inside of the barrel. Has a gated structure, the ends of the cylinder being occluded by the N-termini of the alpha-subunits. Is capped by the proteasome-associated ATPase, ARC.

It localises to the cytoplasm. It functions in the pathway protein degradation; proteasomal Pup-dependent pathway. Its activity is regulated as follows. The formation of the proteasomal ATPase ARC-20S proteasome complex, likely via the docking of the C-termini of ARC into the intersubunit pockets in the alpha-rings, may trigger opening of the gate for substrate entry. Interconversion between the open-gate and close-gate conformations leads to a dynamic regulation of the 20S proteasome proteolysis activity. Functionally, component of the proteasome core, a large protease complex with broad specificity involved in protein degradation. The chain is Proteasome subunit alpha from Thermomonospora curvata (strain ATCC 19995 / DSM 43183 / JCM 3096 / KCTC 9072 / NBRC 15933 / NCIMB 10081 / Henssen B9).